The primary structure comprises 195 residues: MRLAEVVRNTSETQIRVKINLDGTGQQKLATGVPFLDHMLDQIARHGLFDLEIEAHGDLHIDDHHTVEDTGITLGQAVAKAIGDKKGIRRYGHSYVPLDEALSRVVIDFSGRPGLEFHVPFTRARIGTFDVDLSIEFFRGFVNHAGVTLHIDNLRGLNAHHQMETVFKAFGRALRMATELDERAAGQIPSTKGSL.

Belongs to the imidazoleglycerol-phosphate dehydratase family.

It is found in the cytoplasm. It catalyses the reaction D-erythro-1-(imidazol-4-yl)glycerol 3-phosphate = 3-(imidazol-4-yl)-2-oxopropyl phosphate + H2O. The protein operates within amino-acid biosynthesis; L-histidine biosynthesis; L-histidine from 5-phospho-alpha-D-ribose 1-diphosphate: step 6/9. The protein is Imidazoleglycerol-phosphate dehydratase of Paraburkholderia xenovorans (strain LB400).